Reading from the N-terminus, the 162-residue chain is MTAIQQFFKTFFLTELLKGLALTGRYTFKRKFTVQFPEEKTPISPRFRGLHALRRYENGEERCIACKLCEAVCPALAITIESETRADNTRRTTRYDIDLTKCIFCGFCEESCPVDSIVETQILEYHGEKRGDLYFTKDMLLAVGDRYEKEIAAAKAADARYR.

4Fe-4S ferredoxin-type domains follow at residues Arg-54–Glu-83 and Thr-93–Ile-122. The [4Fe-4S] cluster site is built by Cys-63, Cys-66, Cys-69, Cys-73, Cys-102, Cys-105, Cys-108, and Cys-112.

It belongs to the complex I 23 kDa subunit family. In terms of assembly, NDH-1 is composed of 14 different subunits. Subunits NuoA, H, J, K, L, M, N constitute the membrane sector of the complex. [4Fe-4S] cluster serves as cofactor.

The protein resides in the cell inner membrane. It catalyses the reaction a quinone + NADH + 5 H(+)(in) = a quinol + NAD(+) + 4 H(+)(out). Functionally, NDH-1 shuttles electrons from NADH, via FMN and iron-sulfur (Fe-S) centers, to quinones in the respiratory chain. The immediate electron acceptor for the enzyme in this species is believed to be ubiquinone. Couples the redox reaction to proton translocation (for every two electrons transferred, four hydrogen ions are translocated across the cytoplasmic membrane), and thus conserves the redox energy in a proton gradient. This chain is NADH-quinone oxidoreductase subunit I, found in Burkholderia mallei (strain NCTC 10247).